The sequence spans 488 residues: Ribulose bisphosphate carboxylase large chain (488 aa).

Residues Asn-128 and Thr-178 each contribute to the substrate site. The active-site Proton acceptor is Lys-180. Substrate is bound at residue Lys-182. Positions 206, 208, and 209 each coordinate Mg(2+). An N6-carboxylysine modification is found at Lys-206. His-298 functions as the Proton acceptor in the catalytic mechanism. The substrate site is built by Arg-299, His-331, and Ser-383.

The protein belongs to the RuBisCO large chain family. Type I subfamily. As to quaternary structure, heterohexadecamer of 8 large chains and 8 small chains. Mg(2+) is required as a cofactor.

The catalysed reaction is 2 (2R)-3-phosphoglycerate + 2 H(+) = D-ribulose 1,5-bisphosphate + CO2 + H2O. It catalyses the reaction D-ribulose 1,5-bisphosphate + O2 = 2-phosphoglycolate + (2R)-3-phosphoglycerate + 2 H(+). In terms of biological role, ruBisCO catalyzes two reactions: the carboxylation of D-ribulose 1,5-bisphosphate, the primary event in carbon dioxide fixation, as well as the oxidative fragmentation of the pentose substrate. Both reactions occur simultaneously and in competition at the same active site. The sequence is that of Ribulose bisphosphate carboxylase large chain from Xanthobacter autotrophicus (strain ATCC BAA-1158 / Py2).